The sequence spans 378 residues: Anhydro-N-acetylmuramic acid kinase (378 aa).

9–16 (GTSVDGID) contacts ATP.

It belongs to the anhydro-N-acetylmuramic acid kinase family.

It carries out the reaction 1,6-anhydro-N-acetyl-beta-muramate + ATP + H2O = N-acetyl-D-muramate 6-phosphate + ADP + H(+). Its pathway is amino-sugar metabolism; 1,6-anhydro-N-acetylmuramate degradation. It participates in cell wall biogenesis; peptidoglycan recycling. In terms of biological role, catalyzes the specific phosphorylation of 1,6-anhydro-N-acetylmuramic acid (anhMurNAc) with the simultaneous cleavage of the 1,6-anhydro ring, generating MurNAc-6-P. Is required for the utilization of anhMurNAc either imported from the medium or derived from its own cell wall murein, and thus plays a role in cell wall recycling. This Microcystis aeruginosa (strain NIES-843 / IAM M-2473) protein is Anhydro-N-acetylmuramic acid kinase.